A 394-amino-acid polypeptide reads, in one-letter code: Putative F-box protein At5g66830 (394 aa).

One can recognise an F-box domain in the interval 17–63 (DWCWSKLPSDLMQFVFDRLGFADFQRAKSVCSSWLSVSRNSQPNNQI).

The protein is Putative F-box protein At5g66830 of Arabidopsis thaliana (Mouse-ear cress).